A 312-amino-acid chain; its full sequence is Tetraacyldisaccharide 4'-kinase (312 aa).

60–67 (IAGGSGKT) contributes to the ATP binding site.

Belongs to the LpxK family.

The catalysed reaction is a lipid A disaccharide + ATP = a lipid IVA + ADP + H(+). It participates in glycolipid biosynthesis; lipid IV(A) biosynthesis; lipid IV(A) from (3R)-3-hydroxytetradecanoyl-[acyl-carrier-protein] and UDP-N-acetyl-alpha-D-glucosamine: step 6/6. Transfers the gamma-phosphate of ATP to the 4'-position of a tetraacyldisaccharide 1-phosphate intermediate (termed DS-1-P) to form tetraacyldisaccharide 1,4'-bis-phosphate (lipid IVA). The protein is Tetraacyldisaccharide 4'-kinase of Helicobacter acinonychis (strain Sheeba).